Here is an 80-residue protein sequence, read N- to C-terminus: Serine protease inhibitor Kazal-type 6 (80 aa).

Residues 1 to 23 (MKLSGMFLLLSLALFCFLTGVFS) form the signal peptide. At Q24 the chain carries Pyrrolidone carboxylic acid. The 57-residue stretch at 24 to 80 (QGGQVDCGEFQDPKVYCTRESNPHCGSDGQTYGNKCAFCKAIVKSGGKISLKHPGKC) folds into the Kazal-like domain. Cystine bridges form between C30–C62, C40–C59, and C48–C80.

The protein localises to the secreted. Serine protease inhibitor selective for kallikreins. Efficiently inhibits KLK4, KLK5, KLK6, KLK7, KLK12, KLK13 and KLK14. Doesn't inhibit KLK8. The sequence is that of Serine protease inhibitor Kazal-type 6 (SPINK6) from Homo sapiens (Human).